Consider the following 671-residue polypeptide: Bifunctional acetylxylan esterase/xylanase XynS20E (671 aa).

Positions 1 to 19 are cleaved as a signal peptide; that stretch reads MRLGVALSTIAVLLTATSA. The segment at 54–279 is acetylxylan esterase; the sequence is QGAGRDIHVY…IQDIWDFVSQ (226 aa). The Charge relay system role is filled by Ser-152. Asn-238 carries N-linked (GlcNAc...) asparagine glycosylation. Positions 285 to 328 are disordered; sequence PVSASGNGGGNTTPTNPSTGGNGNGNGGGNTTPTNPSTGGNGNG. Over residues 304–314 the composition is skewed to gly residues; that stretch reads GGNGNGNGGGN. 2 consecutive CBM10 domains span residues 335–374 and 383–422; these read KCSSNITKQGYKCCASNCEVVYTDSDGDWGVENDQWCGCG and TCSAKILQQGYKCCPSGCIIYYTDEDGTWGVNGEEWCGCG. Asn-339 carries an N-linked (GlcNAc...) asparagine glycan. Residues Asn-445 and Asn-483 are each glycosylated (N-linked (GlcNAc...) asparagine). One can recognise a GH11 domain in the interval 461 to 661; that stretch reads TVTSNKVGDI…NNGGTSGTAD (201 aa). Residue Glu-555 is the Nucleophile of the active site. The Proton donor role is filled by Glu-648.

In the N-terminal section; belongs to the axeA family. This sequence in the C-terminal section; belongs to the glycosyl hydrolase 11 (cellulase G) family.

Its subcellular location is the secreted. The catalysed reaction is Deacetylation of xylans and xylo-oligosaccharides.. It carries out the reaction Endohydrolysis of (1-&gt;4)-beta-D-xylosidic linkages in xylans.. The protein operates within glycan degradation; xylan degradation. Its function is as follows. Bifunctional acetylxylan esterase/xylanase involved in the hydrolysis of xylan, a major structural heterogeneous polysaccharide found in plant biomass representing the second most abundant polysaccharide in the biosphere, after cellulose. Degrades xylan from acetylxylan, beechwood, birchwood, and oat spelt, and releases acetate from 4-methylumbelliferyl acetate and beta-D-xylose tetraacetate. No activity is observed against carboxy methyl cellulose, beta-glucan, p-nitrophenol acetate, p-nitrophenol laurate, p-nitrophenol myristate, p-nitrophenol, palmitate, or beta-naphthol acetate. The sequence is that of Bifunctional acetylxylan esterase/xylanase XynS20E (xynS20E) from Neocallimastix patriciarum (Rumen fungus).